The primary structure comprises 165 residues: NAD(P)H-quinone oxidoreductase subunit J, chloroplastic (165 aa).

This sequence belongs to the complex I 30 kDa subunit family. In terms of assembly, NDH is composed of at least 16 different subunits, 5 of which are encoded in the nucleus.

It is found in the plastid. It localises to the chloroplast thylakoid membrane. It catalyses the reaction a plastoquinone + NADH + (n+1) H(+)(in) = a plastoquinol + NAD(+) + n H(+)(out). The enzyme catalyses a plastoquinone + NADPH + (n+1) H(+)(in) = a plastoquinol + NADP(+) + n H(+)(out). Functionally, NDH shuttles electrons from NAD(P)H:plastoquinone, via FMN and iron-sulfur (Fe-S) centers, to quinones in the photosynthetic chain and possibly in a chloroplast respiratory chain. The immediate electron acceptor for the enzyme in this species is believed to be plastoquinone. Couples the redox reaction to proton translocation, and thus conserves the redox energy in a proton gradient. In Ipomoea purpurea (Common morning glory), this protein is NAD(P)H-quinone oxidoreductase subunit J, chloroplastic.